The primary structure comprises 86 residues: Large ribosomal subunit protein bL28 (86 aa).

This sequence belongs to the bacterial ribosomal protein bL28 family.

The chain is Large ribosomal subunit protein bL28 from Phocaeicola vulgatus (strain ATCC 8482 / DSM 1447 / JCM 5826 / CCUG 4940 / NBRC 14291 / NCTC 11154) (Bacteroides vulgatus).